The following is a 382-amino-acid chain: Glucose-1-phosphate adenylyltransferase (382 aa).

Residues Y100, G165, 180–181 (EK), and S191 each bind alpha-D-glucose 1-phosphate.

It belongs to the bacterial/plant glucose-1-phosphate adenylyltransferase family. In terms of assembly, homotetramer.

The catalysed reaction is alpha-D-glucose 1-phosphate + ATP + H(+) = ADP-alpha-D-glucose + diphosphate. Its pathway is glycan biosynthesis; glycogen biosynthesis. Involved in the biosynthesis of ADP-glucose, a building block required for the elongation reactions to produce glycogen. Catalyzes the reaction between ATP and alpha-D-glucose 1-phosphate (G1P) to produce pyrophosphate and ADP-Glc. The protein is Glucose-1-phosphate adenylyltransferase of Clostridium novyi (strain NT).